We begin with the raw amino-acid sequence, 141 residues long: Probable mobile endonuclease E (141 aa).

The disordered stretch occupies residues 115–141 (KMSKSENRSAFNRRNQTQNIGGNQRKG). The span at 122-141 (RSAFNRRNQTQNIGGNQRKG) shows a compositional bias: polar residues.

This chain is Probable mobile endonuclease E (mobE), found in Escherichia coli (Bacteriophage T4).